A 352-amino-acid chain; its full sequence is Ketol-acid reductoisomerase (NAD(+)) (352 aa).

Positions 11-199 (ENVVTSEEFT…AIGSGYLFPT (189 aa)) constitute a KARI N-terminal Rossmann domain. NAD(+) contacts are provided by residues 38-41 (YGVQ) and 100-103 (DAGQ). His124 is a catalytic residue. Gly153 is a binding site for NAD(+). In terms of domain architecture, KARI C-terminal knotted spans 200 to 347 (TFEKEVFSDL…AAVRALRPEN (148 aa)). Mg(2+) is bound by residues Asp208, Glu212, Glu244, and Glu248. Position 270 (Ser270) interacts with substrate.

The protein belongs to the ketol-acid reductoisomerase family. Mg(2+) is required as a cofactor.

It catalyses the reaction (2R)-2,3-dihydroxy-3-methylbutanoate + NAD(+) = (2S)-2-acetolactate + NADH + H(+). Its pathway is amino-acid biosynthesis; L-isoleucine biosynthesis; L-isoleucine from 2-oxobutanoate: step 2/4. It functions in the pathway amino-acid biosynthesis; L-valine biosynthesis; L-valine from pyruvate: step 2/4. Functionally, involved in the biosynthesis of branched-chain amino acids (BCAA). Catalyzes an alkyl-migration followed by a ketol-acid reduction of (S)-2-acetolactate (S2AL) to yield (R)-2,3-dihydroxy-isovalerate. In the isomerase reaction, S2AL is rearranged via a Mg-dependent methyl migration to produce 3-hydroxy-3-methyl-2-ketobutyrate (HMKB). In the reductase reaction, this 2-ketoacid undergoes a metal-dependent reduction by NADH to yield (R)-2,3-dihydroxy-isovalerate. This chain is Ketol-acid reductoisomerase (NAD(+)), found in Desulfosudis oleivorans (strain DSM 6200 / JCM 39069 / Hxd3) (Desulfococcus oleovorans).